We begin with the raw amino-acid sequence, 395 residues long: Tyrosine--tRNA ligase 2 (395 aa).

Positions 42 to 51 match the 'HIGH' region motif; sequence PTAPDIHLGH. The 'KMSKS' region signature appears at 226-230; it reads KMSKS. Lys229 provides a ligand contact to ATP. In terms of domain architecture, S4 RNA-binding spans 334-394; the sequence is TPVANLLKDA…GKRKFARITI (61 aa).

This sequence belongs to the class-I aminoacyl-tRNA synthetase family. TyrS type 2 subfamily. In terms of assembly, homodimer.

The protein resides in the cytoplasm. It carries out the reaction tRNA(Tyr) + L-tyrosine + ATP = L-tyrosyl-tRNA(Tyr) + AMP + diphosphate + H(+). In terms of biological role, catalyzes the attachment of tyrosine to tRNA(Tyr) in a two-step reaction: tyrosine is first activated by ATP to form Tyr-AMP and then transferred to the acceptor end of tRNA(Tyr). This is Tyrosine--tRNA ligase 2 from Vibrio parahaemolyticus serotype O3:K6 (strain RIMD 2210633).